The sequence spans 378 residues: Alginate lyase (378 aa).

A signal peptide spans methionine 1–alanine 28. Substrate-binding positions include serine 67 to lysine 68, histidine 140 to threonine 141, and tyrosine 258.

Belongs to the polysaccharide lyase 5 family.

The protein resides in the periplasm. It carries out the reaction Eliminative cleavage of alginate to give oligosaccharides with 4-deoxy-alpha-L-erythro-hex-4-enuronosyl groups at their non-reducing ends and beta-D-mannuronate at their reducing end.. With respect to regulation, the monovalent cation sodium enhances activity but is not absolutely required. Functionally, catalyzes the depolymerization of alginate by cleaving the beta-1,4 glycosidic bond between two adjacent sugar residues via a beta-elimination mechanism. Degrades deacetylated polymannuronate (polyM) alginate from P.aeruginosa more efficiently than non-deacetylated polyM and alginate from M.pyrifera. AlgL from P.syringae also degrades its own alginate, which may indicate a role in cleaving preformed alginate and/or in determining the length of the alginate polymer. May serve to degrade mislocalized alginate that is trapped in the periplasmic space. The sequence is that of Alginate lyase from Pseudomonas syringae pv. syringae.